The following is a 201-amino-acid chain: uncharacterized protein (201 aa).

A disordered region spans residues 1–22 (MAASKAAKSSEDRAGGGGGGGG).

This is an uncharacterized protein from Tomato ringspot virus (isolate raspberry) (ToRSV).